The following is a 306-amino-acid chain: MKPTKQILEDILNEVRPLIGQGEVADYIPALACVPSNKLGIAVYTNDGEMITAGDANERFSIQSISKALSLTLAMELYQPEELWHRVGKEPSGQAFNSLIQLEMEQGVPRNPFINAGAIVVADMLFSRFSAPKHRLLEFVRKLSGNEHIIYDRVVANSEMDHSDRNASIAYLMRSFGNFENEVMPVLKNYFHACSLNMSCVDLAKTFGYLANKGIQPETNEFIITPMQSKQINALMATCGLYDGAGEFAYRVGMPGKSGVGGGIIAIVPGEMTIAVWSPELDPSGNSLAGTQALELLSERIGRSIF.

The substrate site is built by serine 64, asparagine 115, glutamate 159, asparagine 166, tyrosine 190, tyrosine 242, and valine 260.

The protein belongs to the glutaminase family. As to quaternary structure, homotetramer.

The catalysed reaction is L-glutamine + H2O = L-glutamate + NH4(+). The polypeptide is Glutaminase (Aliivibrio salmonicida (strain LFI1238) (Vibrio salmonicida (strain LFI1238))).